Here is a 341-residue protein sequence, read N- to C-terminus: C2 calcium-dependent domain-containing protein 4D (341 aa).

The segment covering 56–71 (RLRDPRGAEGRVDRNP) has biased composition (basic and acidic residues). Disordered regions lie at residues 56 to 75 (RLRD…GGRN) and 134 to 176 (CRAP…PYAP). Over residues 139 to 149 (SDTASSPDSSP) the composition is skewed to low complexity. In terms of domain architecture, C2 spans 205–331 (RGGQLRLSTE…PPLAGGLGPG (127 aa)).

The chain is C2 calcium-dependent domain-containing protein 4D (C2cd4d) from Mus musculus (Mouse).